A 355-amino-acid polypeptide reads, in one-letter code: MDQLPELVPFLLEPKSEIKLLALQHLLGVSDNQEARDILKSTQIINNCIKLITDSNHVVVRHALTILINLCQDTDMLNDIVKKNIVPRLVDGTTDTKNKMSEIFAMLLSNVTHTKEGCLSLMQCGKELEAFFIMKLVQVLTMDSNQEDYFKSTKNNWIVNIILNVTQIQEGRKIVLDKENQIFKEILPLVRHENVIKRRGILGIIRNCCYSEQHHDYLISPEVDILTKLCLPIRGNDKLDDDDLVGLHIDLHNSSLPIGNERDQDRECRKMVVESLIFLTGTKKGRVSMRTAKIYPILRNLFNFETEEELRDNVEKVVELIIRDEEGDPTPEEIEQMNKKQKLEDEDAQFETDEI.

The tract at residues 324 to 355 (DEEGDPTPEEIEQMNKKQKLEDEDAQFETDEI) is disordered. 2 stretches are compositionally biased toward acidic residues: residues 325-335 (EEGDPTPEEIE) and 344-355 (EDEDAQFETDEI).

The protein belongs to the HGH1 family.

The sequence is that of Protein HGH1 homolog from Dictyostelium discoideum (Social amoeba).